A 333-amino-acid chain; its full sequence is T-cell surface glycoprotein CD1b-1 (333 aa).

A signal peptide spans 1 to 18 (MLLLPLLLLAVIVPGGDN). The Extracellular segment spans residues 19 to 302 (EDVFQGPTSF…LYWGHPTSTG (284 aa)). N-linked (GlcNAc...) asparagine glycosylation is found at asparagine 38, asparagine 75, asparagine 146, and asparagine 258. Disulfide bonds link cysteine 120-cysteine 184 and cysteine 224-cysteine 279. In terms of domain architecture, Ig-like spans 185 to 295 (PRYFLSVLDA…LGDQDIVLYW (111 aa)). The helical transmembrane segment at 303 to 323 (LIFVAIIVSSLILLICLALWF) threads the bilayer. The Cytoplasmic segment spans residues 324–333 (WRRWSYLTIL). The short motif at 329–332 (YLTI) is the Internalization signal element.

As to quaternary structure, heterodimer with B2M (beta-2-microglobulin). Interacts with saposin C.

The protein localises to the cell membrane. The protein resides in the endosome membrane. Its subcellular location is the lysosome membrane. Antigen-presenting protein that binds self and non-self lipid and glycolipid antigens and presents them to T-cell receptors on natural killer T-cells. This Ovis aries (Sheep) protein is T-cell surface glycoprotein CD1b-1.